The chain runs to 253 residues: Triosephosphate isomerase (253 aa).

The substrate site is built by Asn12 and Lys14. His96 serves as the catalytic Electrophile. Glu169 functions as the Proton acceptor in the catalytic mechanism.

It belongs to the triosephosphate isomerase family. As to quaternary structure, homodimer.

Its subcellular location is the cytoplasm. It catalyses the reaction D-glyceraldehyde 3-phosphate = dihydroxyacetone phosphate. It functions in the pathway carbohydrate biosynthesis; gluconeogenesis. It participates in carbohydrate degradation; glycolysis; D-glyceraldehyde 3-phosphate from glycerone phosphate: step 1/1. Antigen to the host M.1 monoclonal antibody. The protein is Triosephosphate isomerase (TPI) of Schistosoma mansoni (Blood fluke).